The sequence spans 247 residues: Acidic 27 kDa endochitinase (247 aa).

The signal sequence occupies residues 1–16 (MVLCCVFLLFLTGSFA). Glu-84 acts as the Proton donor in catalysis. The cysteines at positions 206 and 238 are disulfide-linked.

It belongs to the glycosyl hydrolase 19 family. Chitinase class II subfamily.

The protein localises to the secreted. The protein resides in the extracellular space. The enzyme catalyses Random endo-hydrolysis of N-acetyl-beta-D-glucosaminide (1-&gt;4)-beta-linkages in chitin and chitodextrins.. Its function is as follows. Defense against chitin-containing fungal pathogens. This is Acidic 27 kDa endochitinase (CHI17) from Solanum lycopersicum (Tomato).